A 338-amino-acid polypeptide reads, in one-letter code: Ketol-acid reductoisomerase (NADP(+)) (338 aa).

The region spanning 1–181 (MKVSYDKDCD…GGGRTGIIET (181 aa)) is the KARI N-terminal Rossmann domain. NADP(+)-binding positions include 24-27 (YGSQ), R47, S50, S52, and 82-85 (DEFQ). H107 is an active-site residue. NADP(+) is bound at residue G133. The KARI C-terminal knotted domain maps to 182 to 327 (TFKDETETDL…EKLRAMMPWI (146 aa)). Mg(2+) contacts are provided by D190, E194, E226, and E230. Residue S251 participates in substrate binding.

This sequence belongs to the ketol-acid reductoisomerase family. Requires Mg(2+) as cofactor.

It catalyses the reaction (2R)-2,3-dihydroxy-3-methylbutanoate + NADP(+) = (2S)-2-acetolactate + NADPH + H(+). The enzyme catalyses (2R,3R)-2,3-dihydroxy-3-methylpentanoate + NADP(+) = (S)-2-ethyl-2-hydroxy-3-oxobutanoate + NADPH + H(+). The protein operates within amino-acid biosynthesis; L-isoleucine biosynthesis; L-isoleucine from 2-oxobutanoate: step 2/4. It participates in amino-acid biosynthesis; L-valine biosynthesis; L-valine from pyruvate: step 2/4. Functionally, involved in the biosynthesis of branched-chain amino acids (BCAA). Catalyzes an alkyl-migration followed by a ketol-acid reduction of (S)-2-acetolactate (S2AL) to yield (R)-2,3-dihydroxy-isovalerate. In the isomerase reaction, S2AL is rearranged via a Mg-dependent methyl migration to produce 3-hydroxy-3-methyl-2-ketobutyrate (HMKB). In the reductase reaction, this 2-ketoacid undergoes a metal-dependent reduction by NADPH to yield (R)-2,3-dihydroxy-isovalerate. This Stutzerimonas stutzeri (strain A1501) (Pseudomonas stutzeri) protein is Ketol-acid reductoisomerase (NADP(+)).